The sequence spans 259 residues: Dihydroorotate dehydrogenase B (NAD(+)), electron transfer subunit (259 aa).

The FAD-binding FR-type domain occupies 2–102 (MQKQNMIVVN…LGPLGHGFPV (101 aa)). Residues 53 to 56 (RPIS), 70 to 72 (LYR), and 77 to 78 (GT) contribute to the FAD site. [2Fe-2S] cluster-binding residues include C221, C226, C229, and C246.

Belongs to the PyrK family. Heterotetramer of 2 PyrK and 2 PyrD type B subunits. The cofactor is [2Fe-2S] cluster. FAD is required as a cofactor.

It functions in the pathway pyrimidine metabolism; UMP biosynthesis via de novo pathway; orotate from (S)-dihydroorotate (NAD(+) route): step 1/1. In terms of biological role, responsible for channeling the electrons from the oxidation of dihydroorotate from the FMN redox center in the PyrD type B subunit to the ultimate electron acceptor NAD(+). This is Dihydroorotate dehydrogenase B (NAD(+)), electron transfer subunit from Bacillus cereus (strain ATCC 14579 / DSM 31 / CCUG 7414 / JCM 2152 / NBRC 15305 / NCIMB 9373 / NCTC 2599 / NRRL B-3711).